We begin with the raw amino-acid sequence, 197 residues long: Signal peptidase complex catalytic subunit SEC11 (197 aa).

The Cytoplasmic portion of the chain corresponds to M1 to Q14. Residues T15 to W33 form a helical; Signal-anchor for type II membrane protein membrane-spanning segment. Topologically, residues K34–E197 are lumenal. N-linked (GlcNAc...) asparagine glycosylation occurs at N41. Catalysis depends on charge relay system residues S53 and H92. Positions P102–E115 are enriched in basic and acidic residues. A disordered region spans residues P102–N134. D139 (charge relay system) is an active-site residue. The segment at V183–L194 is C-terminal short (CTS) helix.

It belongs to the peptidase S26B family. As to quaternary structure, component of the signal peptidase complex (SPC) composed of a catalytic subunit SEC11 and three accessory subunits SPC1, SPC2 and SPC3. The complex induces a local thinning of the ER membrane which is used to measure the length of the signal peptide (SP) h-region of protein substrates. This ensures the selectivity of the complex towards h-regions shorter than 18-20 amino acids. SPC associates with the translocon complex.

Its subcellular location is the endoplasmic reticulum membrane. It catalyses the reaction Cleavage of hydrophobic, N-terminal signal or leader sequences from secreted and periplasmic proteins.. In terms of biological role, catalytic component of the signal peptidase complex (SPC) which catalyzes the cleavage of N-terminal signal sequences from nascent proteins as they are translocated into the lumen of the endoplasmic reticulum. Specifically cleaves N-terminal signal peptides that contain a hydrophobic alpha-helix (h-region) shorter than 18-20 amino acids. The sequence is that of Signal peptidase complex catalytic subunit SEC11 (SEC11) from Paracoccidioides brasiliensis (strain Pb18).